A 290-amino-acid chain; its full sequence is Ribosomal RNA small subunit methyltransferase A (290 aa).

Positions 27, 29, 54, 75, 100, and 125 each coordinate S-adenosyl-L-methionine.

Belongs to the class I-like SAM-binding methyltransferase superfamily. rRNA adenine N(6)-methyltransferase family. RsmA subfamily.

It is found in the cytoplasm. The enzyme catalyses adenosine(1518)/adenosine(1519) in 16S rRNA + 4 S-adenosyl-L-methionine = N(6)-dimethyladenosine(1518)/N(6)-dimethyladenosine(1519) in 16S rRNA + 4 S-adenosyl-L-homocysteine + 4 H(+). Its function is as follows. Specifically dimethylates two adjacent adenosines (A1518 and A1519) in the loop of a conserved hairpin near the 3'-end of 16S rRNA in the 30S particle. May play a critical role in biogenesis of 30S subunits. This Streptococcus thermophilus (strain CNRZ 1066) protein is Ribosomal RNA small subunit methyltransferase A.